Reading from the N-terminus, the 343-residue chain is Anthranilate phosphoribosyltransferase (343 aa).

Residues G83, G86–D87, T91, N93–T96, K111–S119, and S123 each bind 5-phospho-alpha-D-ribose 1-diphosphate. Residue G83 coordinates anthranilate. S95 contacts Mg(2+). R169 contributes to the anthranilate binding site. Mg(2+) contacts are provided by D228 and E229.

This sequence belongs to the anthranilate phosphoribosyltransferase family. Homodimer. Mg(2+) is required as a cofactor.

The enzyme catalyses N-(5-phospho-beta-D-ribosyl)anthranilate + diphosphate = 5-phospho-alpha-D-ribose 1-diphosphate + anthranilate. The protein operates within amino-acid biosynthesis; L-tryptophan biosynthesis; L-tryptophan from chorismate: step 2/5. Catalyzes the transfer of the phosphoribosyl group of 5-phosphorylribose-1-pyrophosphate (PRPP) to anthranilate to yield N-(5'-phosphoribosyl)-anthranilate (PRA). The polypeptide is Anthranilate phosphoribosyltransferase (Thiobacillus denitrificans (strain ATCC 25259 / T1)).